A 493-amino-acid polypeptide reads, in one-letter code: Trigger factor (493 aa).

The PPIase FKBP-type domain maps to 169 to 254; the sequence is GDRVTMDYLG…VKEVAAPAET (86 aa). Positions 439 to 493 are disordered; the sequence is ELLAEDEDGDDTKPAKKSAKKKAAKAEDASAEGEEAAPKKKAAAKKKAADEGDAE.

This sequence belongs to the FKBP-type PPIase family. Tig subfamily.

Its subcellular location is the cytoplasm. It carries out the reaction [protein]-peptidylproline (omega=180) = [protein]-peptidylproline (omega=0). Functionally, involved in protein export. Acts as a chaperone by maintaining the newly synthesized protein in an open conformation. Functions as a peptidyl-prolyl cis-trans isomerase. This Allorhizobium ampelinum (strain ATCC BAA-846 / DSM 112012 / S4) (Agrobacterium vitis (strain S4)) protein is Trigger factor.